Reading from the N-terminus, the 264-residue chain is Regulator of cytoskeleton and endocytosis RVS161 (264 aa).

The BAR domain occupies 15 to 239 (ASVIVKDVDK…LDPASRDEYA (225 aa)).

The protein resides in the cytoplasm. Its subcellular location is the cytoskeleton. Functionally, component of a cytoskeletal structure that is required for the formation of endocytic vesicles at the plasma membrane level. Plays an important role in virulence. The sequence is that of Regulator of cytoskeleton and endocytosis RVS161 (RVS161) from Candida albicans (strain SC5314 / ATCC MYA-2876) (Yeast).